A 552-amino-acid chain; its full sequence is Ribulokinase (552 aa).

The protein belongs to the ribulokinase family.

The catalysed reaction is D-ribulose + ATP = D-ribulose 5-phosphate + ADP + H(+). It carries out the reaction L-ribulose + ATP = L-ribulose 5-phosphate + ADP + H(+). It participates in carbohydrate degradation; L-arabinose degradation via L-ribulose; D-xylulose 5-phosphate from L-arabinose (bacterial route): step 2/3. This is Ribulokinase from Bacillus licheniformis (strain ATCC 14580 / DSM 13 / JCM 2505 / CCUG 7422 / NBRC 12200 / NCIMB 9375 / NCTC 10341 / NRRL NRS-1264 / Gibson 46).